The sequence spans 43 residues: Potassium channel toxin gamma-KTx 4.5 (43 aa).

Intrachain disulfides connect cysteine 5-cysteine 23, cysteine 11-cysteine 34, cysteine 20-cysteine 39, and cysteine 24-cysteine 41.

The protein belongs to the ergtoxin family. Gamma-KTx 4 subfamily. As to expression, expressed by the venom gland.

It localises to the secreted. Functionally, reversibly blocks Kv11/ERG potassium channels. This chain is Potassium channel toxin gamma-KTx 4.5, found in Centruroides exilicauda (Bark scorpion).